The following is a 495-amino-acid chain: OTU domain-containing protein CG3251 (495 aa).

An OTU domain is found at 29 to 150 (LFRKHMLGDA…MGHFETVLTM (122 aa)). The Tudor domain occupies 302 to 364 (NFKVGAKCQV…HPLPPDEFKA (63 aa)). A compositionally biased stretch (polar residues) spans 375 to 389 (LHNSQMGRQSVQGDQ). The disordered stretch occupies residues 375–404 (LHNSQMGRQSVQGDQQGFVPDPMPGTAPSM). The segment covering 395-404 (DPMPGTAPSM) has biased composition (pro residues).

Functionally, putative OTU-type deubiquitinase. Catalytically inactive towards all diubiquitin molecules and long K48- and K63- linked ubiquitin chains in vitro. Potential modulator of apoptosis. In Drosophila melanogaster (Fruit fly), this protein is OTU domain-containing protein CG3251.